The chain runs to 685 residues: Probable glucan endo-1,3-beta-glucosidase btgC (685 aa).

Disordered regions lie at residues Met-1 to Pro-96, Gly-119 to Tyr-168, and Pro-180 to Gln-202. The Cytoplasmic portion of the chain corresponds to Met-1–Arg-312. Composition is skewed to polar residues over residues Ser-47 to Phe-61 and Gly-73 to Gly-90. The chain crosses the membrane as a helical; Signal-anchor for type II membrane protein span at residues Gly-313–Val-333. Residues Gly-334–Ala-685 lie on the Extracellular side of the membrane. Positions Gly-335 to Lys-369 are disordered. The segment covering Pro-345–Asp-360 has biased composition (polar residues). Residues Asn-405, Asn-428, and Asn-456 are each glycosylated (N-linked (GlcNAc...) asparagine). The Proton donor role is filled by Glu-488. The Nucleophile role is filled by Glu-587. Residue Asn-632 is glycosylated (N-linked (GlcNAc...) asparagine).

Belongs to the glycosyl hydrolase 17 family.

It is found in the cell membrane. The enzyme catalyses Hydrolysis of (1-&gt;3)-beta-D-glucosidic linkages in (1-&gt;3)-beta-D-glucans.. Its function is as follows. Glucanases play a role in cell expansion during growth, in cell-cell fusion during mating, and in spore release during sporulation. This enzyme may be involved in beta-glucan degradation. Active on laminarin and lichenan. The protein is Probable glucan endo-1,3-beta-glucosidase btgC (btgC) of Aspergillus oryzae (strain ATCC 42149 / RIB 40) (Yellow koji mold).